Consider the following 366-residue polypeptide: tRNA 2-selenouridine synthase (366 aa).

The region spanning 12–135 (FLNDVPMMDA…MRTFLLDTLH (124 aa)) is the Rhodanese domain. C95 functions as the S-selanylcysteine intermediate in the catalytic mechanism.

Belongs to the SelU family. In terms of assembly, monomer.

It carries out the reaction 5-methylaminomethyl-2-thiouridine(34) in tRNA + selenophosphate + (2E)-geranyl diphosphate + H2O + H(+) = 5-methylaminomethyl-2-selenouridine(34) in tRNA + (2E)-thiogeraniol + phosphate + diphosphate. The catalysed reaction is 5-methylaminomethyl-2-thiouridine(34) in tRNA + (2E)-geranyl diphosphate = 5-methylaminomethyl-S-(2E)-geranyl-thiouridine(34) in tRNA + diphosphate. It catalyses the reaction 5-methylaminomethyl-S-(2E)-geranyl-thiouridine(34) in tRNA + selenophosphate + H(+) = 5-methylaminomethyl-2-(Se-phospho)selenouridine(34) in tRNA + (2E)-thiogeraniol. The enzyme catalyses 5-methylaminomethyl-2-(Se-phospho)selenouridine(34) in tRNA + H2O = 5-methylaminomethyl-2-selenouridine(34) in tRNA + phosphate. Its function is as follows. Involved in the post-transcriptional modification of the uridine at the wobble position (U34) of tRNA(Lys), tRNA(Glu) and tRNA(Gln). Catalyzes the conversion of 2-thiouridine (S2U-RNA) to 2-selenouridine (Se2U-RNA). Acts in a two-step process involving geranylation of 2-thiouridine (S2U) to S-geranyl-2-thiouridine (geS2U) and subsequent selenation of the latter derivative to 2-selenouridine (Se2U) in the tRNA chain. In Pseudomonas syringae pv. tomato (strain ATCC BAA-871 / DC3000), this protein is tRNA 2-selenouridine synthase.